Reading from the N-terminus, the 100-residue chain is Urease subunit gamma (100 aa).

The protein belongs to the urease gamma subunit family. As to quaternary structure, heterotrimer of UreA (gamma), UreB (beta) and UreC (alpha) subunits. Three heterotrimers associate to form the active enzyme.

The protein resides in the cytoplasm. It carries out the reaction urea + 2 H2O + H(+) = hydrogencarbonate + 2 NH4(+). The protein operates within nitrogen metabolism; urea degradation; CO(2) and NH(3) from urea (urease route): step 1/1. This chain is Urease subunit gamma, found in Rhizobium leguminosarum bv. viciae.